Consider the following 117-residue polypeptide: Large ribosomal subunit protein bL20 (117 aa).

Belongs to the bacterial ribosomal protein bL20 family.

Its function is as follows. Binds directly to 23S ribosomal RNA and is necessary for the in vitro assembly process of the 50S ribosomal subunit. It is not involved in the protein synthesizing functions of that subunit. This Citrifermentans bemidjiense (strain ATCC BAA-1014 / DSM 16622 / JCM 12645 / Bem) (Geobacter bemidjiensis) protein is Large ribosomal subunit protein bL20.